We begin with the raw amino-acid sequence, 305 residues long: Mitochondrial thiamine pyrophosphate carrier 1 (305 aa).

6 consecutive transmembrane segments (helical) span residues 16–32, 84–100, 122–142, 169–193, 213–229, and 270–287; these read VSPYESLLAGSISGAVA, ILYVLYGAAQFTTYSSI, LVSGTGAGVVSTLVTYPFDLL, GFTGLFAGIKPAMLSISTTTGLMFW, ICGFIAGATSKGITFPL, and GFGISVLKTSPTSAVSLF. 3 Solcar repeats span residues 16–103, 116–201, and 206–295; these read VSPY…ISRW, PSSA…VRET, and DIPF…SLAA.

This sequence belongs to the mitochondrial carrier (TC 2.A.29) family.

The protein resides in the mitochondrion inner membrane. Functionally, mitochondrial transporter that mediates uptake of thiamine pyrophosphate (ThPP) into mitochondria. The sequence is that of Mitochondrial thiamine pyrophosphate carrier 1 (TPC1) from Scheffersomyces stipitis (strain ATCC 58785 / CBS 6054 / NBRC 10063 / NRRL Y-11545) (Yeast).